A 136-amino-acid polypeptide reads, in one-letter code: Large ribosomal subunit protein uL16 (136 aa).

It belongs to the universal ribosomal protein uL16 family. In terms of assembly, part of the 50S ribosomal subunit.

In terms of biological role, binds 23S rRNA and is also seen to make contacts with the A and possibly P site tRNAs. The polypeptide is Large ribosomal subunit protein uL16 (Orientia tsutsugamushi (strain Boryong) (Rickettsia tsutsugamushi)).